The sequence spans 399 residues: Elongation factor Tu (399 aa).

One can recognise a tr-type G domain in the interval 10 to 204 (KPHVNIGTIG…AVDASIPEPE (195 aa)). Residues 19-26 (GHVDHGKT) form a G1 region. 19 to 26 (GHVDHGKT) is a binding site for GTP. Threonine 26 is a Mg(2+) binding site. The interval 60-64 (GITIN) is G2. The tract at residues 81–84 (DCPG) is G3. Residues 81–85 (DCPGH) and 136–139 (NKCD) each bind GTP. Residues 136–139 (NKCD) form a G4 region. The G5 stretch occupies residues 174 to 176 (SGL).

This sequence belongs to the TRAFAC class translation factor GTPase superfamily. Classic translation factor GTPase family. EF-Tu/EF-1A subfamily. As to quaternary structure, monomer.

It localises to the cytoplasm. It carries out the reaction GTP + H2O = GDP + phosphate + H(+). Functionally, GTP hydrolase that promotes the GTP-dependent binding of aminoacyl-tRNA to the A-site of ribosomes during protein biosynthesis. The sequence is that of Elongation factor Tu from Prochlorococcus marinus (strain NATL1A).